Consider the following 93-residue polypeptide: Putative regulatory protein LBL_1834 (93 aa).

This sequence belongs to the RemA family.

The chain is Putative regulatory protein LBL_1834 from Leptospira borgpetersenii serovar Hardjo-bovis (strain L550).